Here is a 280-residue protein sequence, read N- to C-terminus: Keratin, type I cytoskeletal 47 kDa (280 aa).

Residues 1–81 (MSFRSSSSYS…SSSFSSFGGN (81 aa)) form a head region. A coil 1A region spans residues 82-117 (DKQTMQNLNDRLASYLEKVRALEAANADLELKIREW). One can recognise an IF rod domain in the interval 82 to 280 (DKQTMQNLND…RDAELWFNQK (199 aa)). The tract at residues 118–139 (YEKQKGSGIGAASKDFSKYFEI) is linker 1. The tract at residues 140 to 231 (ISDLRNKILF…KNHEEEMSIA (92 aa)) is coil 1B. The segment at 232-254 (KGSAAGQVTVEMDAAPGVDLNKI) is linker 12. A coil 2 region spans residues 255 to 280 (LSDMRADYETLAEKNRRDAELWFNQK).

This sequence belongs to the intermediate filament family. As to quaternary structure, heterotetramer of two type I and two type II keratins.

This chain is Keratin, type I cytoskeletal 47 kDa (xk81b1), found in Xenopus laevis (African clawed frog).